The sequence spans 690 residues: Glycine--tRNA ligase beta subunit (690 aa).

Belongs to the class-II aminoacyl-tRNA synthetase family. Tetramer of two alpha and two beta subunits.

Its subcellular location is the cytoplasm. It carries out the reaction tRNA(Gly) + glycine + ATP = glycyl-tRNA(Gly) + AMP + diphosphate. The polypeptide is Glycine--tRNA ligase beta subunit (Desulfatibacillum aliphaticivorans).